The chain runs to 84 residues: Small ribosomal subunit protein bS16c (84 aa).

This sequence belongs to the bacterial ribosomal protein bS16 family.

The protein resides in the plastid. It localises to the chloroplast. The protein is Small ribosomal subunit protein bS16c of Anthoceros angustus (Hornwort).